A 740-amino-acid chain; its full sequence is Platelet endothelial cell adhesion molecule (740 aa).

The first 27 residues, 1 to 27, serve as a signal peptide directing secretion; that stretch reads MRLRWTQGGNMWLGVLLTLQLCSSLEG. Residues 28-602 lie on the Extracellular side of the membrane; that stretch reads QENSFTINSI…VRVYLAPWKK (575 aa). Ig-like C2-type domains lie at 35–126, 145–223, and 236–315; these read NSIH…YKVV, GGVV…DSVR, and PKFH…SKVS. Asn52 and Asn84 each carry an N-linked (GlcNAc...) asparagine glycan. Intrachain disulfides connect Cys57–Cys109, Cys152–Cys206, and Cys256–Cys304. N-linked (GlcNAc...) asparagine glycosylation is found at Asn284, Asn301, Asn320, Asn357, Asn372, Asn436, Asn456, and Asn552. Ig-like C2-type domains follow at residues 328–404, 425–494, and 500–592; these read PKLK…VQIA, GQTI…KVLR, and PVEE…NILA. 3 disulfides stabilise this stretch: Cys347–Cys387, Cys432–Cys477, and Cys524–Cys573. The chain crosses the membrane as a helical span at residues 603-621; that stretch reads GLIAVVVIAVIIAVLLLGA. The Cytoplasmic portion of the chain corresponds to 622–740; it reads RFYFLKKSKA…SRTEGSLDGT (119 aa). 2 short sequence motifs (ITIM motif) span residues 690-695 and 713-718; these read VEYTEV and TVYSEI. Residues Tyr692 and Tyr715 each carry the phosphotyrosine; by FER modification. Residues 697 to 740 form a disordered region; it reads VTSPEPHRGLGTKGTETVYSEIRKADPDLVENRYSRTEGSLDGT. The tract at residues 711–731 is membrane-bound segment which detaches upon phosphorylation; the sequence is TETVYSEIRKADPDLVENRYS. Positions 717 to 732 are enriched in basic and acidic residues; that stretch reads EIRKADPDLVENRYSR. Positions 723–740 are may play a role in cytoprotective signaling; the sequence is PDLVENRYSRTEGSLDGT. 2 positions are modified to phosphoserine: Ser731 and Ser736.

Trans-homodimer (via Ig-like C2-type 1 and Ig-like C2-type 2 domains); trans-homodimerization is required for cell-cell interaction. Forms a complex with BDKRB2 and GNAQ. Interacts with BDKRB2 and GNAQ. Interacts with PTPN11; Tyr-715 is critical for PTPN11 recruitment. Interacts with FER. Interacts with CD177; the interaction is Ca(2+)-dependent; the interaction is direct. In terms of processing, phosphorylated on Ser and Tyr residues by src kinases after cellular activation. Upon activation, phosphorylated on Ser-731 which probably initiates the dissociation of the membrane-interaction segment (residues 711-731) from the cell membrane allowing the sequential phosphorylation of Tyr-715 and Tyr-692. Constitutively phosphorylated on Ser-736 in resting platelets. Phosphorylated on tyrosine residues by FER and FES in response to FCER1 activation. In endothelial cells Fyn mediates mechanical-force (stretch or pull) induced tyrosine phosphorylation. Post-translationally, palmitoylation by ZDHHC21 is necessary for cell surface expression in endothelial cells and enrichment in membrane rafts.

It is found in the cell membrane. The protein localises to the membrane raft. The protein resides in the cell junction. Cell adhesion molecule which is required for leukocyte transendothelial migration (TEM) under most inflammatory conditions. Tyr-692 plays a critical role in TEM and is required for efficient trafficking of PECAM1 to and from the lateral border recycling compartment (LBRC) and is also essential for the LBRC membrane to be targeted around migrating leukocytes. Trans-homophilic interaction may play a role in endothelial cell-cell adhesion via cell junctions. Heterophilic interaction with CD177 plays a role in transendothelial migration of neutrophils. Homophilic ligation of PECAM1 prevents macrophage-mediated phagocytosis of neighboring viable leukocytes by transmitting a detachment signal. Promotes macrophage-mediated phagocytosis of apoptotic leukocytes by tethering them to the phagocytic cells; PECAM1-mediated detachment signal appears to be disabled in apoptotic leukocytes. Modulates bradykinin receptor BDKRB2 activation. Regulates bradykinin- and hyperosmotic shock-induced ERK1/2 activation in endothelial cells. Induces susceptibility to atherosclerosis. This is Platelet endothelial cell adhesion molecule (PECAM1) from Sus scrofa (Pig).